A 709-amino-acid polypeptide reads, in one-letter code: F-box only protein 40 (709 aa).

Residues 53–112 (EHQLLCPLEQVPCLNSEYGCPLSMSRHKLAKHLQVCPASVVCCSMEWNRWPNVDSETTLH) form a TRAF-type zinc finger. The segment at 232–280 (TNSSASCESKNKNDSEKEQISSGHNMVEGEGAPKKKEPQENQKQQDVRT) is disordered. 2 stretches are compositionally biased toward basic and acidic residues: residues 240 to 250 (SKNKNDSEKEQ) and 262 to 277 (GAPK…KQQD). An F-box domain is found at 570–624 (QNSLTSLPLEILKYIAGFLDSVSLAQLSQVSVLMRNICATLLQERGMVLLQWKKK).

As to quaternary structure, directly interacts with SKP1 and CUL1. As to expression, expressed only in heart and skeletal muscle.

It localises to the cytoplasm. Functionally, probable substrate-recognition component of the SCF (SKP1-CUL1-F-box protein)-type E3 ubiquitin ligase complex that may function in myogenesis. This Homo sapiens (Human) protein is F-box only protein 40 (FBXO40).